Here is a 149-residue protein sequence, read N- to C-terminus: Putative oligosaccharyltransferase complex subunit CG9662 (149 aa).

Residues 1 to 32 (MIETLYNLPFHILVPPNIKVRRFSIPMPSPMA) are Cytoplasmic-facing. The helical transmembrane segment at 33–53 (VFSVILFSYFLVTGGIIYDVI) threads the bilayer. At 54–83 (VEPPSLGATVDEHGHSRPVAFMPYRVNGQY) the chain is on the extracellular side. The helical transmembrane segment at 84 to 104 (IMEGLASSFLFTVGGLGFIIM) threads the bilayer. The Cytoplasmic portion of the chain corresponds to 105-117 (DQTHTPGKTNLNR). A helical transmembrane segment spans residues 118 to 138 (LLLTAMGFIFILVSFFTTWLF). Over 139–149 (MRMKLPSYLQP) the chain is Extracellular.

It belongs to the OSTC family. In terms of assembly, component of the oligosaccharyltransferase (OST) complex.

It is found in the membrane. Functionally, subunit of the oligosaccharyl transferase (OST) complex that catalyzes the initial transfer of a defined glycan (Glc(3)Man(9)GlcNAc(2) in eukaryotes) from the lipid carrier dolichol-pyrophosphate to an asparagine residue within an Asn-X-Ser/Thr consensus motif in nascent polypeptide chains, the first step in protein N-glycosylation. N-glycosylation occurs cotranslationally and the complex associates with the Sec61 complex at the channel-forming translocon complex that mediates protein translocation across the endoplasmic reticulum (ER). All subunits are required for a maximal enzyme activity. This is Putative oligosaccharyltransferase complex subunit CG9662 from Drosophila melanogaster (Fruit fly).